Reading from the N-terminus, the 445-residue chain is DNA polymerase IV (445 aa).

A UmuC domain is found at 49 to 229 (LAHVDCDAFY…KPVGMIWGVG (181 aa)). Asp-53 and Asp-146 together coordinate Mg(2+). Residue Glu-147 is part of the active site.

This sequence belongs to the DNA polymerase type-Y family. As to quaternary structure, monomer. It depends on Mg(2+) as a cofactor.

It localises to the cytoplasm. It catalyses the reaction DNA(n) + a 2'-deoxyribonucleoside 5'-triphosphate = DNA(n+1) + diphosphate. Its function is as follows. Poorly processive, error-prone DNA polymerase involved in untargeted mutagenesis. Copies undamaged DNA at stalled replication forks, which arise in vivo from mismatched or misaligned primer ends. These misaligned primers can be extended by PolIV. Exhibits no 3'-5' exonuclease (proofreading) activity. May be involved in translesional synthesis, in conjunction with the beta clamp from PolIII. This is DNA polymerase IV from Brucella melitensis biotype 1 (strain ATCC 23456 / CCUG 17765 / NCTC 10094 / 16M).